Here is a 292-residue protein sequence, read N- to C-terminus: Phosphatidylserine decarboxylase proenzyme (292 aa).

Active-site charge relay system; for autoendoproteolytic cleavage activity residues include aspartate 92, histidine 149, and serine 256. Residue serine 256 is the Schiff-base intermediate with substrate; via pyruvic acid; for decarboxylase activity of the active site. Serine 256 carries the post-translational modification Pyruvic acid (Ser); by autocatalysis.

The protein belongs to the phosphatidylserine decarboxylase family. PSD-B subfamily. Prokaryotic type I sub-subfamily. Heterodimer of a large membrane-associated beta subunit and a small pyruvoyl-containing alpha subunit. Requires pyruvate as cofactor. Post-translationally, is synthesized initially as an inactive proenzyme. Formation of the active enzyme involves a self-maturation process in which the active site pyruvoyl group is generated from an internal serine residue via an autocatalytic post-translational modification. Two non-identical subunits are generated from the proenzyme in this reaction, and the pyruvate is formed at the N-terminus of the alpha chain, which is derived from the carboxyl end of the proenzyme. The autoendoproteolytic cleavage occurs by a canonical serine protease mechanism, in which the side chain hydroxyl group of the serine supplies its oxygen atom to form the C-terminus of the beta chain, while the remainder of the serine residue undergoes an oxidative deamination to produce ammonia and the pyruvoyl prosthetic group on the alpha chain. During this reaction, the Ser that is part of the protease active site of the proenzyme becomes the pyruvoyl prosthetic group, which constitutes an essential element of the active site of the mature decarboxylase.

It is found in the cell membrane. It catalyses the reaction a 1,2-diacyl-sn-glycero-3-phospho-L-serine + H(+) = a 1,2-diacyl-sn-glycero-3-phosphoethanolamine + CO2. The protein operates within phospholipid metabolism; phosphatidylethanolamine biosynthesis; phosphatidylethanolamine from CDP-diacylglycerol: step 2/2. Functionally, catalyzes the formation of phosphatidylethanolamine (PtdEtn) from phosphatidylserine (PtdSer). The sequence is that of Phosphatidylserine decarboxylase proenzyme from Baumannia cicadellinicola subsp. Homalodisca coagulata.